Here is a 504-residue protein sequence, read N- to C-terminus: Ribosomal protein uS12 methylthiotransferase RimO (504 aa).

Residues 21–131 (KRVGFISLGC…VMGHVRELLP (111 aa)) enclose the MTTase N-terminal domain. [4Fe-4S] cluster-binding residues include C30, C66, C95, C186, C190, and C193. The region spanning 172-408 (LTPRHYAYVK…MEVAQRISTE (237 aa)) is the Radical SAM core domain. Residues 411-487 (SEKVGRVMDV…EYDLFGEVIE (77 aa)) enclose the TRAM domain.

Belongs to the methylthiotransferase family. RimO subfamily. [4Fe-4S] cluster serves as cofactor.

It localises to the cytoplasm. The catalysed reaction is L-aspartate(89)-[ribosomal protein uS12]-hydrogen + (sulfur carrier)-SH + AH2 + 2 S-adenosyl-L-methionine = 3-methylsulfanyl-L-aspartate(89)-[ribosomal protein uS12]-hydrogen + (sulfur carrier)-H + 5'-deoxyadenosine + L-methionine + A + S-adenosyl-L-homocysteine + 2 H(+). Catalyzes the methylthiolation of an aspartic acid residue of ribosomal protein uS12. This is Ribosomal protein uS12 methylthiotransferase RimO from Deinococcus radiodurans (strain ATCC 13939 / DSM 20539 / JCM 16871 / CCUG 27074 / LMG 4051 / NBRC 15346 / NCIMB 9279 / VKM B-1422 / R1).